A 333-amino-acid polypeptide reads, in one-letter code: MELFKHFLQSTASDVFVSPVSISAVLAVLLEGAKGRTAAQLRLALEPRYSHLDKVTVASRVYGDWRLDIKPKFMQAVRDRFELVNFNHSPEKIKDDINRWVAARTNNKILNAVNSISPDTKLLIVAAIYFEVAWRNQFVPDFTIEGEFWVTKDVSKTVRMMTLSDDFRFVDVRNEGIKMIELPYEYGYSMLVIIPDDLEQVERHLSLMKVISWLKMSTLRYVHLSFPKFKMETSYTLNEALATSGVTDIFAHPNFEDMTDDKNVAVSDIFHKAYIEVTEFGTTAASCTYGCVTDFGGTMDPVVLKVNKPFIFIIKHDDTFSLLFLGRVTSPNY.

Belongs to the serpin family. Poxviruses subfamily.

The protein resides in the host cytoplasm. Weak inhibitor of the interleukin-1-beta converting enzyme (ICE) and of granzyme B. Does not form a stable complex with ICE, but can for a stable complex with granzyme B. The protein is Serine proteinase inhibitor 2 (SERP2) of Myxoma virus (strain Uriarra) (MYXV).